Here is a 331-residue protein sequence, read N- to C-terminus: Elongation factor Ts, mitochondrial (331 aa).

Residues 254 to 295 (SPLTVGEMPEVREEEGEKKDGDKQDEEERSTDSDEDETQMLR) are disordered. The segment covering 262–275 (PEVREEEGEKKDGD) has biased composition (basic and acidic residues). Acidic residues predominate over residues 276–291 (KQDEEERSTDSDEDET).

Belongs to the EF-Ts family.

The protein localises to the mitochondrion. Associates with the EF-Tu.GDP complex and induces the exchange of GDP to GTP. It remains bound to the aminoacyl-tRNA.EF-Tu.GTP complex up to the GTP hydrolysis stage on the ribosome. The polypeptide is Elongation factor Ts, mitochondrial (Branchiostoma floridae (Florida lancelet)).